The primary structure comprises 693 residues: Elongation factor G (693 aa).

The region spanning 8–282 is the tr-type G domain; the sequence is EKTRNIGIMA…AVIDYLPSPL (275 aa). Residues 17–24, 81–85, and 135–138 contribute to the GTP site; these read AHVDAGKT, DTPGH, and NKMD.

It belongs to the TRAFAC class translation factor GTPase superfamily. Classic translation factor GTPase family. EF-G/EF-2 subfamily.

The protein localises to the cytoplasm. In terms of biological role, catalyzes the GTP-dependent ribosomal translocation step during translation elongation. During this step, the ribosome changes from the pre-translocational (PRE) to the post-translocational (POST) state as the newly formed A-site-bound peptidyl-tRNA and P-site-bound deacylated tRNA move to the P and E sites, respectively. Catalyzes the coordinated movement of the two tRNA molecules, the mRNA and conformational changes in the ribosome. The sequence is that of Elongation factor G from Streptococcus suis (strain 05ZYH33).